Here is a 209-residue protein sequence, read N- to C-terminus: Ribosomal RNA large subunit methyltransferase E (209 aa).

S-adenosyl-L-methionine is bound by residues Gly-63, Trp-65, Asp-83, Asp-99, and Asp-124. Lys-164 (proton acceptor) is an active-site residue.

This sequence belongs to the class I-like SAM-binding methyltransferase superfamily. RNA methyltransferase RlmE family.

It is found in the cytoplasm. The enzyme catalyses uridine(2552) in 23S rRNA + S-adenosyl-L-methionine = 2'-O-methyluridine(2552) in 23S rRNA + S-adenosyl-L-homocysteine + H(+). Its function is as follows. Specifically methylates the uridine in position 2552 of 23S rRNA at the 2'-O position of the ribose in the fully assembled 50S ribosomal subunit. This is Ribosomal RNA large subunit methyltransferase E from Vibrio campbellii (strain ATCC BAA-1116).